Consider the following 463-residue polypeptide: tRNA (guanine(10)-N(2))-methyltransferase TRMT11 (463 aa).

Position 2 is an N-acetylalanine (alanine 2).

The protein belongs to the class I-like SAM-binding methyltransferase superfamily. TRM11 methyltransferase family. As to quaternary structure, part of the heterodimeric TRMT11-TRM112 methyltransferase complex; this complex forms an active tRNA methyltransferase, where TRMT112 acts as an activator of the catalytic subunit TRMT11.

It localises to the cytoplasm. The enzyme catalyses guanosine(10) in tRNA + S-adenosyl-L-methionine = N(2)-methylguanosine(10) in tRNA + S-adenosyl-L-homocysteine + H(+). Catalytic subunit of the TRMT11-TRM112 methyltransferase complex, that specifically mediates the S-adenosyl-L-methionine-dependent N(2)-methylation of guanosine nucleotide at position 10 (m2G10) in tRNAs. This is one of the major tRNA (guanine-N(2))-methyltransferases. This chain is tRNA (guanine(10)-N(2))-methyltransferase TRMT11, found in Pongo abelii (Sumatran orangutan).